The sequence spans 169 residues: ATP synthase subunit b (169 aa).

Residues His12–Ile32 traverse the membrane as a helical segment.

Belongs to the ATPase B chain family. As to quaternary structure, F-type ATPases have 2 components, F(1) - the catalytic core - and F(0) - the membrane proton channel. F(1) has five subunits: alpha(3), beta(3), gamma(1), delta(1), epsilon(1). F(0) has three main subunits: a(1), b(2) and c(10-14). The alpha and beta chains form an alternating ring which encloses part of the gamma chain. F(1) is attached to F(0) by a central stalk formed by the gamma and epsilon chains, while a peripheral stalk is formed by the delta and b chains.

It is found in the cell membrane. F(1)F(0) ATP synthase produces ATP from ADP in the presence of a proton or sodium gradient. F-type ATPases consist of two structural domains, F(1) containing the extramembraneous catalytic core and F(0) containing the membrane proton channel, linked together by a central stalk and a peripheral stalk. During catalysis, ATP synthesis in the catalytic domain of F(1) is coupled via a rotary mechanism of the central stalk subunits to proton translocation. Its function is as follows. Component of the F(0) channel, it forms part of the peripheral stalk, linking F(1) to F(0). The chain is ATP synthase subunit b from Lactobacillus helveticus (strain DPC 4571).